The chain runs to 752 residues: Endo-1,4-beta-xylanase 3 (752 aa).

The tract at residues 1–22 (MEKNTNTNHTSDDNNDKNHTNE) is disordered. Basic and acidic residues predominate over residues 10–22 (TSDDNNDKNHTNE). CBM-cenC domains follow at residues 26 to 163 (KIIL…EGPP) and 197 to 344 (NIVE…VQGP). One can recognise a GH10 domain in the interval 397–692 (FPYIVKVKQT…NEAGKRFLEV (296 aa)). Glu-526 (proton donor) is an active-site residue. Residue Glu-627 is the Nucleophile of the active site.

Belongs to the glycosyl hydrolase 10 (cellulase F) family. As to expression, confined to immature xylems.

The catalysed reaction is Endohydrolysis of (1-&gt;4)-beta-D-xylosidic linkages in xylans.. Its pathway is glycan degradation; xylan degradation. Functionally, binds to and hydrolyzes insoluble and soluble xylan substrates. This is Endo-1,4-beta-xylanase 3 from Arabidopsis thaliana (Mouse-ear cress).